The sequence spans 669 residues: Matrix metalloproteinase-15 (669 aa).

The or 45 signal peptide spans 1 to 41 (MGSDPSAPGRPGWTGSLLGDREEAARPRLLPLLLVLLGCLG). The propeptide occupies 42-131 (LGVAAEDAEV…KANLRRRRKR (90 aa)). The Cysteine switch signature appears at 109–116 (PRCGVPDQ). Cys111 is a Zn(2+) binding site. At 132–625 (YALTGRKWNN…QMEEVARTVN (494 aa)) the chain is on the extracellular side. Residue Asn150 is glycosylated (N-linked (GlcNAc...) asparagine). His259 serves as a coordination point for Zn(2+). The active site involves Glu260. His263 and His269 together coordinate Zn(2+). The disordered stretch occupies residues 300 to 370 (QQLYGTPDGQ…RPDQYGPNIC (71 aa)). Over residues 305–322 (TPDGQPQPTQPLPTVTPR) the composition is skewed to low complexity. Pro residues predominate over residues 333 to 342 (RPPQPPPPGG). Hemopexin repeat units follow at residues 367-415 (PNIC…WRGL), 416-461 (PGDI…GLGI), 463-511 (YDRI…QGIP), and 512-559 (ASPK…FMGC). Cys370 and Cys559 are disulfide-bonded. The segment at 574–593 (RPPFNPHGGAEPGADSAEGD) is disordered. Ser589 is modified (phosphoserine). Residues 626-646 (VVMVLVPLLLLLCVLGLTYAL) form a helical membrane-spanning segment. Residues 647–669 (VQMQRKGAPRVLLYCKRSLQEWV) are Cytoplasmic-facing.

This sequence belongs to the peptidase M10A family. The cofactor is Zn(2+). Ca(2+) is required as a cofactor. In terms of processing, the precursor is cleaved by a furin endopeptidase. As to expression, appeared to be synthesized preferentially in liver, placenta, testis, colon and intestine. Substantial amounts are also detected in pancreas, kidney, lung, heart and skeletal muscle.

The protein resides in the membrane. Its function is as follows. Endopeptidase that degrades various components of the extracellular matrix. May activate progelatinase A. This is Matrix metalloproteinase-15 (MMP15) from Homo sapiens (Human).